A 128-amino-acid polypeptide reads, in one-letter code: MFYSIVAIFVGAGLGALLRWCLSLTLNAFFPAVPLGTLAANLLGGYVIGVAAVVFTVRVGLPPEWRLFVITGFLGGLTTFSTYSVEVMTHALEGEFGWALAVAALHLTGSFALTALGMWTARAWLAAA.

The next 4 helical transmembrane spans lie at 2-22 (FYSIVAIFVGAGLGALLRWCL), 35-55 (LGTLAANLLGGYVIGVAAVVF), 67-87 (LFVITGFLGGLTTFSTYSVEV), and 96-116 (FGWALAVAALHLTGSFALTAL). Residues Gly75 and Thr78 each coordinate Na(+).

The protein belongs to the fluoride channel Fluc/FEX (TC 1.A.43) family.

The protein localises to the cell inner membrane. The enzyme catalyses fluoride(in) = fluoride(out). Na(+) is not transported, but it plays an essential structural role and its presence is essential for fluoride channel function. In terms of biological role, fluoride-specific ion channel. Important for reducing fluoride concentration in the cell, thus reducing its toxicity. In Burkholderia cenocepacia (strain ATCC BAA-245 / DSM 16553 / LMG 16656 / NCTC 13227 / J2315 / CF5610) (Burkholderia cepacia (strain J2315)), this protein is Fluoride-specific ion channel FluC.